The sequence spans 95 residues: Large ribosomal subunit protein uL23 (95 aa).

Belongs to the universal ribosomal protein uL23 family. Part of the 50S ribosomal subunit. Contacts protein L29, and trigger factor when it is bound to the ribosome.

One of the early assembly proteins it binds 23S rRNA. One of the proteins that surrounds the polypeptide exit tunnel on the outside of the ribosome. Forms the main docking site for trigger factor binding to the ribosome. The polypeptide is Large ribosomal subunit protein uL23 (Coxiella burnetii (strain RSA 493 / Nine Mile phase I)).